We begin with the raw amino-acid sequence, 224 residues long: uncharacterized protein (224 aa).

Residues 21–41 (LTVILIIPIVYLGVCGCFEIV) form a helical membrane-spanning segment.

It is found in the membrane. This is an uncharacterized protein from Methanocaldococcus jannaschii (strain ATCC 43067 / DSM 2661 / JAL-1 / JCM 10045 / NBRC 100440) (Methanococcus jannaschii).